A 155-amino-acid chain; its full sequence is Ciliary microtubule inner protein 2C (155 aa).

It belongs to the CIMIP2 family.

It localises to the cytoplasm. The protein resides in the cytoskeleton. Its subcellular location is the cilium axoneme. Functionally, microtubule inner protein (MIP) part of the dynein-decorated doublet microtubules (DMTs) in cilia axoneme, which is required for motile cilia beating. The chain is Ciliary microtubule inner protein 2C (cimip2c) from Xenopus tropicalis (Western clawed frog).